A 1083-amino-acid polypeptide reads, in one-letter code: Carbamoyl phosphate synthase large chain (1083 aa).

Positions Met-1 to Glu-402 are carboxyphosphate synthetic domain. ATP contacts are provided by Arg-129, Arg-169, Gly-175, Gly-176, Glu-208, Val-210, Glu-215, Gly-241, Val-242, His-243, Gln-285, and Glu-299. In terms of domain architecture, ATP-grasp 1 spans Lys-133–Leu-328. Gln-285, Glu-299, and Asn-301 together coordinate Mg(2+). Residues Gln-285, Glu-299, and Asn-301 each contribute to the Mn(2+) site. Residues Leu-403–Ala-554 form an oligomerization domain region. The segment at Pro-555 to Gly-937 is carbamoyl phosphate synthetic domain. The ATP-grasp 2 domain occupies Ala-679 to Val-871. Arg-715, Arg-754, Leu-756, Glu-761, Gly-787, Val-788, His-789, Ser-790, Gln-830, and Glu-842 together coordinate ATP. Mg(2+) contacts are provided by Gln-830, Glu-842, and Asn-844. Mn(2+) contacts are provided by Gln-830, Glu-842, and Asn-844. One can recognise an MGS-like domain in the interval Val-938 to Pro-1078. The allosteric domain stretch occupies residues Val-938–Arg-1083.

The protein belongs to the CarB family. As to quaternary structure, composed of two chains; the small (or glutamine) chain promotes the hydrolysis of glutamine to ammonia, which is used by the large (or ammonia) chain to synthesize carbamoyl phosphate. Tetramer of heterodimers (alpha,beta)4. Requires Mg(2+) as cofactor. Mn(2+) serves as cofactor.

It carries out the reaction hydrogencarbonate + L-glutamine + 2 ATP + H2O = carbamoyl phosphate + L-glutamate + 2 ADP + phosphate + 2 H(+). The enzyme catalyses hydrogencarbonate + NH4(+) + 2 ATP = carbamoyl phosphate + 2 ADP + phosphate + 2 H(+). Its pathway is amino-acid biosynthesis; L-arginine biosynthesis; carbamoyl phosphate from bicarbonate: step 1/1. The protein operates within pyrimidine metabolism; UMP biosynthesis via de novo pathway; (S)-dihydroorotate from bicarbonate: step 1/3. Its function is as follows. Large subunit of the glutamine-dependent carbamoyl phosphate synthetase (CPSase). CPSase catalyzes the formation of carbamoyl phosphate from the ammonia moiety of glutamine, carbonate, and phosphate donated by ATP, constituting the first step of 2 biosynthetic pathways, one leading to arginine and/or urea and the other to pyrimidine nucleotides. The large subunit (synthetase) binds the substrates ammonia (free or transferred from glutamine from the small subunit), hydrogencarbonate and ATP and carries out an ATP-coupled ligase reaction, activating hydrogencarbonate by forming carboxy phosphate which reacts with ammonia to form carbamoyl phosphate. The sequence is that of Carbamoyl phosphate synthase large chain from Myxococcus xanthus (strain DK1622).